A 280-amino-acid polypeptide reads, in one-letter code: Dimethylglycine N-methyltransferase (280 aa).

The protein belongs to the methyltransferase superfamily. As to quaternary structure, monomer.

The catalysed reaction is N,N-dimethylglycine + S-adenosyl-L-methionine = glycine betaine + S-adenosyl-L-homocysteine + H(+). It participates in amine and polyamine biosynthesis; betaine biosynthesis via glycine pathway; betaine from glycine: step 3/3. Its function is as follows. Catalyzes the methylation of dimethylglycine to betaine with S-adenosylmethionine (AdoMet) acting as the methyl donor. It has strict specificity for dimethylglycine as the methyl group acceptors. This Parasynechococcus marenigrum (strain WH8102) protein is Dimethylglycine N-methyltransferase.